Reading from the N-terminus, the 528-residue chain is GMP synthase [glutamine-hydrolyzing] (528 aa).

The Glutamine amidotransferase type-1 domain occupies 13 to 204; the sequence is AIVILDFGSQ…VYDICSCEPD (192 aa). C90 serves as the catalytic Nucleophile. Residues H178 and E180 contribute to the active site. One can recognise a GMPS ATP-PPase domain in the interval 205-403; sequence WTTNLFIDEA…LGLPDEIVRR (199 aa). Residue 232–238 coordinates ATP; the sequence is SGGVDSS.

Homodimer.

It catalyses the reaction XMP + L-glutamine + ATP + H2O = GMP + L-glutamate + AMP + diphosphate + 2 H(+). Its pathway is purine metabolism; GMP biosynthesis; GMP from XMP (L-Gln route): step 1/1. In terms of biological role, catalyzes the synthesis of GMP from XMP. In Prochlorococcus marinus (strain NATL2A), this protein is GMP synthase [glutamine-hydrolyzing].